The chain runs to 456 residues: Probable mannan endo-1,4-beta-mannosidase F (456 aa).

Positions 1 to 18 (MRPLSSAALLSAIGAVAA) are cleaved as a signal peptide. The CBM1 domain maps to 19–54 (QVGPWGQCGGQSYTGGTSCVSGWACVFLNDWYSQCQ). Residues 79-110 (STSVSATAPPSSTSSSTASVSSSTSSTPIPTS) are disordered. The segment at 79–113 (STSVSATAPPSSTSSSTASVSSSTSSTPIPTSSGS) is ser-rich linker. Residues 114 to 456 (FVKAEGLKFN…CAVIDHVSRI (343 aa)) are catalytic. Positions 166 and 280 each coordinate substrate. E281 (proton donor) is an active-site residue. Residue Y356 participates in substrate binding. The Nucleophile role is filled by E390. W420 is a binding site for substrate.

Belongs to the glycosyl hydrolase 5 (cellulase A) family.

It is found in the secreted. It carries out the reaction Random hydrolysis of (1-&gt;4)-beta-D-mannosidic linkages in mannans, galactomannans and glucomannans.. Its function is as follows. Endo-1,4-mannanase, a crucial enzyme for depolymerization of seed galactomannans and wood galactoglucomannans. This Neosartorya fischeri (strain ATCC 1020 / DSM 3700 / CBS 544.65 / FGSC A1164 / JCM 1740 / NRRL 181 / WB 181) (Aspergillus fischerianus) protein is Probable mannan endo-1,4-beta-mannosidase F (manF).